Consider the following 84-residue polypeptide: Putative membrane protein insertion efficiency factor (84 aa).

Residues 63–84 (WGGSGYDPVPGADPEHDRRPRG) are disordered. Positions 75 to 84 (DPEHDRRPRG) are enriched in basic and acidic residues.

This sequence belongs to the UPF0161 family.

It localises to the cell inner membrane. Its function is as follows. Could be involved in insertion of integral membrane proteins into the membrane. In Cereibacter sphaeroides (strain ATCC 17029 / ATH 2.4.9) (Rhodobacter sphaeroides), this protein is Putative membrane protein insertion efficiency factor.